The sequence spans 210 residues: 7-carboxy-7-deazaguanine synthase (210 aa).

Substrate contacts are provided by residues 12 to 14 (LQG) and arginine 27. A Radical SAM core domain is found at 18–210 (QAGRAAVFCR…LQTHKYIGIP (193 aa)). Residues cysteine 31, cysteine 46, and cysteine 49 each coordinate [4Fe-4S] cluster. Residue threonine 51 participates in Mg(2+) binding. Substrate is bound at residue threonine 90. S-adenosyl-L-methionine contacts are provided by residues glycine 92, 133-135 (SPK), and 173-176 (QPMD). Substrate is bound at residue proline 210.

It belongs to the radical SAM superfamily. 7-carboxy-7-deazaguanine synthase family. Homodimer. [4Fe-4S] cluster serves as cofactor. Requires S-adenosyl-L-methionine as cofactor. The cofactor is Mg(2+).

It carries out the reaction 6-carboxy-5,6,7,8-tetrahydropterin + H(+) = 7-carboxy-7-deazaguanine + NH4(+). It participates in purine metabolism; 7-cyano-7-deazaguanine biosynthesis. Its function is as follows. Catalyzes the complex heterocyclic radical-mediated conversion of 6-carboxy-5,6,7,8-tetrahydropterin (CPH4) to 7-carboxy-7-deazaguanine (CDG), a step common to the biosynthetic pathways of all 7-deazapurine-containing compounds. The protein is 7-carboxy-7-deazaguanine synthase of Bordetella pertussis (strain Tohama I / ATCC BAA-589 / NCTC 13251).